A 348-amino-acid polypeptide reads, in one-letter code: Ribosomal RNA small subunit methyltransferase C (348 aa).

It belongs to the methyltransferase superfamily. RsmC family. As to quaternary structure, monomer.

It is found in the cytoplasm. It carries out the reaction guanosine(1207) in 16S rRNA + S-adenosyl-L-methionine = N(2)-methylguanosine(1207) in 16S rRNA + S-adenosyl-L-homocysteine + H(+). Specifically methylates the guanine in position 1207 of 16S rRNA in the 30S particle. This chain is Ribosomal RNA small subunit methyltransferase C, found in Pectobacterium atrosepticum (strain SCRI 1043 / ATCC BAA-672) (Erwinia carotovora subsp. atroseptica).